The chain runs to 408 residues: MANINENYLKLKAGYLFPEISKRVKIYSEKNPSAKIIRLGIGDVTLPIVPSVVDAMVEASKEMGTVGGFHGYGPEQGYSFLLKSIADHDYGSLGIKIDESEIFVSDGSKCDCGNIQEIFSTDSKIAVADPVYPVYVDTNVMAGRTGEIGPDGRYSNLIYMPATKENGFQPEIPKEKADIVYLCYPNNPTGTVTTKESLKAWVEYAKKNNSIILYDSAYEAFISEPGVPRSIYEVEGAKEVAIEFRSFSKTAGFTGLRCAYIVIPKELKGRTRSGEEVSLNSLWNRRHTTKFNGVSYVTQKGAEACYSPQGKKEIQTSIAYYMANASKIRDGLKKAGYEVFGGVNAPYIWLKTSDNLSSWDFFDKLLNKAQVVGTPGSGFGPAGEGYFRLSAFGKKEDVEEAIARITSL.

Residues Tyr-15 and Gly-42 each contribute to the substrate site. Pyridoxal 5'-phosphate-binding positions include Tyr-72, 108–109, Tyr-132, Asn-187, Tyr-218, and 246–248; these read SK and SFS. Substrate contacts are provided by Lys-109, Tyr-132, and Asn-187. Lys-249 is modified (N6-(pyridoxal phosphate)lysine). Positions 257 and 292 each coordinate pyridoxal 5'-phosphate. The substrate site is built by Asn-292 and Arg-388.

It belongs to the class-I pyridoxal-phosphate-dependent aminotransferase family. LL-diaminopimelate aminotransferase subfamily. Homodimer. Pyridoxal 5'-phosphate serves as cofactor.

The enzyme catalyses (2S,6S)-2,6-diaminopimelate + 2-oxoglutarate = (S)-2,3,4,5-tetrahydrodipicolinate + L-glutamate + H2O + H(+). It participates in amino-acid biosynthesis; L-lysine biosynthesis via DAP pathway; LL-2,6-diaminopimelate from (S)-tetrahydrodipicolinate (aminotransferase route): step 1/1. Its function is as follows. Involved in the synthesis of meso-diaminopimelate (m-DAP or DL-DAP), required for both lysine and peptidoglycan biosynthesis. Catalyzes the direct conversion of tetrahydrodipicolinate to LL-diaminopimelate. Is also able to catalyze the reverse reaction in vitro, i.e. the transamination of LL-diaminopimelate with 2-oxoglutarate to produce tetrahydrodipicolinate and glutamate. Cannot use m-DAP, lysine or ornithine as the amino-group donor, when using 2-oxoglutarate as the amino-group acceptor. Cannot use pyruvate, indole 3-pyruvate, oxaloacetate or phenyl pyruvate as the amino-group acceptor, when using LL-DAP as the amino-group donor. This chain is LL-diaminopimelate aminotransferase, found in Leptospira interrogans serogroup Icterohaemorrhagiae serovar copenhageni (strain Fiocruz L1-130).